The primary structure comprises 291 residues: Phytanoyl-CoA dioxygenase domain-containing protein 1 (291 aa).

The residue at position 55 (Thr-55) is a Phosphothreonine. 2-oxoglutarate contacts are provided by residues Lys-102, Met-141, 156 to 158, and Trp-174; that span reads HQD. Fe cation is bound by residues His-156 and Asp-158. Position 246 (His-246) interacts with Fe cation. Residues Ser-248 and Arg-257 each coordinate 2-oxoglutarate.

It belongs to the PhyH family. PHYHD1 subfamily. The cofactor is Fe cation.

2-oxoglutarate(2OG)-dependent dioxygenase that catalyzes the conversion of 2-oxoglutarate to succinate and CO(2) in an iron-dependent manner. However, does not couple 2OG turnover to the hydroxylation of acyl-coenzyme A derivatives, implying that it is not directly involved in phytanoyl coenzyme-A metabolism. Does not show detectable activity towards fatty acid CoA thioesters. The sequence is that of Phytanoyl-CoA dioxygenase domain-containing protein 1 from Mus musculus (Mouse).